Reading from the N-terminus, the 302-residue chain is Uricase (302 aa).

An N-acetylserine modification is found at Ser2. Active-site charge relay system residues include Lys11 and Thr58. 5-hydroxyisourate-binding residues include Thr58, Asp59, Phe160, Arg177, Val228, Gln229, and Asn255. Thr58 is a binding site for O2. Thr58, Asp59, Phe160, Arg177, Val228, Gln229, and Asn255 together coordinate urate. Asn255 is an O2 binding site. His257 (charge relay system) is an active-site residue. Positions 300-302 (SKL) match the Microbody targeting signal motif.

This sequence belongs to the uricase family. Homotetramer.

The protein resides in the peroxisome. The enzyme catalyses urate + O2 + H2O = 5-hydroxyisourate + H2O2. It functions in the pathway purine metabolism; urate degradation; (S)-allantoin from urate: step 1/3. Its activity is regulated as follows. 8-Azaxanthine is one of the most potent competitive inhibitors of uricase activity. Hypoxanthine has only a small inhibitor effect, and caffeine has no effect at all. Azide not only competes with dioxygen but also competes with the substrate for its enzymatic site. In terms of biological role, urate oxidase is a cofactorless enzyme involved in the metabolism of purines. Catalyzes, in the presence of molecular oxygen, the hydroxylation of uric acid to metastable 5-hydroxyisourate (5-HIU) which is further degraded to allantoin. The sequence is that of Uricase from Aspergillus flavus.